The primary structure comprises 358 residues: Protein PXR1 (358 aa).

Disordered regions lie at residues 1 to 26 and 146 to 342; these read MGLAAPKNRSKISNDPQNTTWANNTS and EVKT…KSAT. A compositionally biased stretch (polar residues) spans 11-26; that stretch reads KISNDPQNTTWANNTS. The G-patch domain maps to 25-79; it reads TSRFGHRILTSQGWQPGDSLGASDAAHAAHYTVASQSHIRVLLKDDNLGLGAKRG. Composition is skewed to basic and acidic residues over residues 146-171 and 199-217; these read EVKTETQAKVEVKSEPESDGAKEDDR and SMDLRDQAKKDIAAESSKD. Residues 218-227 show a composition bias toward basic residues; that stretch reads KKGKKSKKDK. Over residues 287 to 299 the composition is skewed to acidic residues; the sequence is DVEDLSSESEDES. Positions 300–315 are enriched in polar residues; that stretch reads TPSASRPATGTSTPTV. Residues 328–339 show a composition bias toward basic residues; sequence HSVRQKWIRSKK.

It belongs to the PINX1 family.

It localises to the nucleus. Its subcellular location is the nucleolus. In terms of biological role, involved in rRNA-processing at A0, A1 and A2 sites and negatively regulates telomerase. In Phaeosphaeria nodorum (strain SN15 / ATCC MYA-4574 / FGSC 10173) (Glume blotch fungus), this protein is Protein PXR1 (PXR1).